Here is a 162-residue protein sequence, read N- to C-terminus: Dihydrofolate reductase (162 aa).

The DHFR domain maps to K3–R161. Residue I7–A9 coordinates substrate. Residues A8–A9 and I16–A21 each bind NADP(+). A substrate-binding site is contributed by D29. Residue G45–T48 coordinates NADP(+). Residue R60 coordinates substrate. NADP(+) contacts are provided by residues I65–Q68 and M98–I103. Residue T117 coordinates substrate.

The protein belongs to the dihydrofolate reductase family.

It catalyses the reaction (6S)-5,6,7,8-tetrahydrofolate + NADP(+) = 7,8-dihydrofolate + NADPH + H(+). Its pathway is cofactor biosynthesis; tetrahydrofolate biosynthesis; 5,6,7,8-tetrahydrofolate from 7,8-dihydrofolate: step 1/1. Its function is as follows. Key enzyme in folate metabolism. Catalyzes an essential reaction for de novo glycine and purine synthesis, and for DNA precursor synthesis. The chain is Dihydrofolate reductase (folA) from Neisseria meningitidis serogroup B (strain ATCC BAA-335 / MC58).